We begin with the raw amino-acid sequence, 62 residues long: AGAYTLFGKAIPPHHLAIATIGTVVALVAPKPWSPKVKLEPKIDASSPEEEKFIKEYLEKHL.

The chain crosses the membrane as a helical span at residues histidine 14–proline 30.

F-type ATP synthases have 2 components, the catalytic core F(1) and the membrane-embedded component F(0), linked together by a central stalk and a peripheral stalk. The central stalk, also called rotor shaft, is often seen as part of F(1). The peripheral stalk is seen as part of F(0). F(0) contains the membrane channel next to the rotor. F-type ATP synthases form dimers but each monomer functions independently in ATP generation. The dimer consists of 18 different polypeptides: ATP1 (subunit alpha, part of F(1), 3 molecules per monomer), ATP2 (subunit beta, part of F(1), 3 molecules per monomer), ATP3 (subunit gamma, part of the central stalk), ATP4 (subunit b, part of the peripheral stalk), ATP5/OSCP (subunit 5/OSCP, part of the peripheral stalk), ATP6 (subunit a, part of the peripheral stalk), ATP7 (subunit d, part of the peripheral stalk), ATP8 (subunit 8, part of the peripheral stalk), OLI1 (subunit c, part of the rotor, 10 molecules per monomer), ATP14 (subunit h, part of the peripheral stalk), ATP15 (subunit epsilon, part of the central stalk), ATP16 (subunit delta, part of the central stalk), ATP17 (subunit f, part of the peripheral stalk), ATP18 (subunit i/j, part of the peripheral stalk). Dimer-specific subunits are ATP19 (subunit k, at interface between monomers), ATP20 (subunit g, at interface between monomers), TIM11 (subunit e, at interface between monomers). Also contains subunit L.

It localises to the mitochondrion inner membrane. Its function is as follows. Mitochondrial membrane ATP synthase (F(1)F(0) ATP synthase or Complex V) produces ATP from ADP in the presence of a proton gradient across the membrane which is generated by electron transport complexes of the respiratory chain. F-type ATP synthases consist of two structural domains, F(1) - containing the extramembraneous catalytic core, and F(0) - containing the membrane proton channel, linked together by a central stalk and a peripheral stalk. During catalysis, ATP synthesis in the catalytic domain of F(1) is coupled via a rotary mechanism of the central stalk subunits to proton translocation. Part of the complex F(0) domain. Minor subunit located with subunit a/ATP6 in the membrane. The K chain binds the dimeric form by interacting with the G and E chains. The sequence is that of ATP synthase subunit K, mitochondrial from Pichia angusta (Yeast).